Here is a 160-residue protein sequence, read N- to C-terminus: Transcription elongation factor GreA (160 aa).

Positions 1-72 form a coiled coil; it reads MAEKTYPMTL…QISSLETKIR (72 aa).

Belongs to the GreA/GreB family.

Functionally, necessary for efficient RNA polymerase transcription elongation past template-encoded arresting sites. The arresting sites in DNA have the property of trapping a certain fraction of elongating RNA polymerases that pass through, resulting in locked ternary complexes. Cleavage of the nascent transcript by cleavage factors such as GreA or GreB allows the resumption of elongation from the new 3'terminus. GreA releases sequences of 2 to 3 nucleotides. This Streptococcus pneumoniae serotype 4 (strain ATCC BAA-334 / TIGR4) protein is Transcription elongation factor GreA.